The following is a 61-amino-acid chain: Small ribosomal subunit protein uS14 (61 aa).

Residues cysteine 24, cysteine 27, cysteine 40, and cysteine 43 each coordinate Zn(2+).

It belongs to the universal ribosomal protein uS14 family. Zinc-binding uS14 subfamily. In terms of assembly, part of the 30S ribosomal subunit. Contacts proteins S3 and S10. It depends on Zn(2+) as a cofactor.

Its function is as follows. Binds 16S rRNA, required for the assembly of 30S particles and may also be responsible for determining the conformation of the 16S rRNA at the A site. This chain is Small ribosomal subunit protein uS14, found in Clostridium botulinum (strain ATCC 19397 / Type A).